The sequence spans 840 residues: Protein translocase subunit SecA (840 aa).

ATP-binding positions include Gln87, 105–109 (GEGKT), and Asp494. The interval 518 to 537 (RRIDNQLRGRSGRQGDPGSS) is disordered. Zn(2+) contacts are provided by Cys826, Cys828, Cys837, and Cys838.

The protein belongs to the SecA family. As to quaternary structure, monomer and homodimer. Part of the essential Sec protein translocation apparatus which comprises SecA, SecYEG and auxiliary proteins SecDF-YajC and YidC. Requires Zn(2+) as cofactor.

The protein localises to the cell inner membrane. It localises to the cytoplasm. It catalyses the reaction ATP + H2O + cellular proteinSide 1 = ADP + phosphate + cellular proteinSide 2.. Part of the Sec protein translocase complex. Interacts with the SecYEG preprotein conducting channel. Has a central role in coupling the hydrolysis of ATP to the transfer of proteins into and across the cell membrane, serving as an ATP-driven molecular motor driving the stepwise translocation of polypeptide chains across the membrane. This Desulforapulum autotrophicum (strain ATCC 43914 / DSM 3382 / VKM B-1955 / HRM2) (Desulfobacterium autotrophicum) protein is Protein translocase subunit SecA.